We begin with the raw amino-acid sequence, 200 residues long: Phospholipase A2 inhibitor gamma subunit A (200 aa).

An N-terminal signal peptide occupies residues 1–19; the sequence is MKSLHTICLLFIFIARGNS. 8 cysteine pairs are disulfide-bonded: cysteine 22-cysteine 46, cysteine 25-cysteine 32, cysteine 39-cysteine 67, cysteine 73-cysteine 94, cysteine 95-cysteine 100, cysteine 118-cysteine 143, cysteine 136-cysteine 165, and cysteine 169-cysteine 191. Residue asparagine 176 is glycosylated (N-linked (GlcNAc...) asparagine).

It belongs to the CNF-like-inhibitor family. Occurs as a mixture of oligomers. Tetrameric arrangement appears to be the predominant quaternary structure. In terms of tissue distribution, expressed by the liver.

The protein resides in the secreted. Inhibits the enzymatic activity of phospholipase A2 (PA2). This chain is Phospholipase A2 inhibitor gamma subunit A, found in Gloydius brevicaudus siniticus (Chinese mamushi).